Reading from the N-terminus, the 233-residue chain is Probable septum site-determining protein MinC (233 aa).

A disordered region spans residues 104-124 (QKMATPEPAPAPAPVVDPNAP).

Belongs to the MinC family. Interacts with MinD and FtsZ.

Functionally, cell division inhibitor that blocks the formation of polar Z ring septums. Rapidly oscillates between the poles of the cell to destabilize FtsZ filaments that have formed before they mature into polar Z rings. Prevents FtsZ polymerization. The protein is Probable septum site-determining protein MinC of Serratia proteamaculans (strain 568).